A 364-amino-acid polypeptide reads, in one-letter code: UDP-N-acetylglucosamine--N-acetylmuramyl-(pentapeptide) pyrophosphoryl-undecaprenol N-acetylglucosamine transferase 1 (364 aa).

UDP-N-acetyl-alpha-D-glucosamine contacts are provided by residues 10–12, N124, S195, I250, and Q295; that span reads TGG.

This sequence belongs to the glycosyltransferase 28 family. MurG subfamily.

The protein resides in the cell membrane. The enzyme catalyses di-trans,octa-cis-undecaprenyl diphospho-N-acetyl-alpha-D-muramoyl-L-alanyl-D-glutamyl-meso-2,6-diaminopimeloyl-D-alanyl-D-alanine + UDP-N-acetyl-alpha-D-glucosamine = di-trans,octa-cis-undecaprenyl diphospho-[N-acetyl-alpha-D-glucosaminyl-(1-&gt;4)]-N-acetyl-alpha-D-muramoyl-L-alanyl-D-glutamyl-meso-2,6-diaminopimeloyl-D-alanyl-D-alanine + UDP + H(+). It participates in cell wall biogenesis; peptidoglycan biosynthesis. Its function is as follows. Cell wall formation. Catalyzes the transfer of a GlcNAc subunit on undecaprenyl-pyrophosphoryl-MurNAc-pentapeptide (lipid intermediate I) to form undecaprenyl-pyrophosphoryl-MurNAc-(pentapeptide)GlcNAc (lipid intermediate II). The polypeptide is UDP-N-acetylglucosamine--N-acetylmuramyl-(pentapeptide) pyrophosphoryl-undecaprenol N-acetylglucosamine transferase 1 (Bacillus cereus (strain ATCC 14579 / DSM 31 / CCUG 7414 / JCM 2152 / NBRC 15305 / NCIMB 9373 / NCTC 2599 / NRRL B-3711)).